A 211-amino-acid polypeptide reads, in one-letter code: Transcription antitermination protein NusB (211 aa).

Belongs to the NusB family.

In terms of biological role, involved in transcription antitermination. Required for transcription of ribosomal RNA (rRNA) genes. Binds specifically to the boxA antiterminator sequence of the ribosomal RNA (rrn) operons. This chain is Transcription antitermination protein NusB, found in Trichormus variabilis (strain ATCC 29413 / PCC 7937) (Anabaena variabilis).